The chain runs to 429 residues: UPF0053 protein YugS (429 aa).

4 helical membrane passes run 1–21, 61–81, 101–121, and 133–153; these read MLILQLIAIFVLIGITAVFVA, ACQLGITITALGLGWLGEPTF, IVTFVVAFIIVTFLHVVMGEL, and AVSLWIAKPLIWFYKITYPFI. Positions 1–201 constitute a CNNM transmembrane domain; sequence MLILQLIAIF…YEKGEINQSE (201 aa). 2 consecutive CBS domains span residues 220–281 and 284–341; these read MIPR…PIKL and IMRP…IRDE.

It belongs to the UPF0053 family.

The protein resides in the cell membrane. This is UPF0053 protein YugS (yugS) from Bacillus subtilis (strain 168).